A 243-amino-acid chain; its full sequence is 3-deoxy-manno-octulosonate cytidylyltransferase (243 aa).

It belongs to the KdsB family.

The protein localises to the cytoplasm. It catalyses the reaction 3-deoxy-alpha-D-manno-oct-2-ulosonate + CTP = CMP-3-deoxy-beta-D-manno-octulosonate + diphosphate. The protein operates within nucleotide-sugar biosynthesis; CMP-3-deoxy-D-manno-octulosonate biosynthesis; CMP-3-deoxy-D-manno-octulosonate from 3-deoxy-D-manno-octulosonate and CTP: step 1/1. It functions in the pathway bacterial outer membrane biogenesis; lipopolysaccharide biosynthesis. In terms of biological role, activates KDO (a required 8-carbon sugar) for incorporation into bacterial lipopolysaccharide in Gram-negative bacteria. The protein is 3-deoxy-manno-octulosonate cytidylyltransferase of Helicobacter pylori (strain P12).